We begin with the raw amino-acid sequence, 117 residues long: Putative membrane protein insertion efficiency factor (117 aa).

It belongs to the UPF0161 family.

It is found in the cell inner membrane. In terms of biological role, could be involved in insertion of integral membrane proteins into the membrane. This Bartonella bacilliformis (strain ATCC 35685 / KC583 / Herrer 020/F12,63) protein is Putative membrane protein insertion efficiency factor.